A 1013-amino-acid chain; its full sequence is Probable ubiquitination network signaling protein acrB (1013 aa).

Disordered stretches follow at residues 1–65 and 104–139; these read MPRS…NSDT and GQANGAVPQNGCLPGDAARRTEKPATASKRSGSSAS. Residues 33–64 show a composition bias toward polar residues; sequence NGHLNGNHANSSTPTSGPSSQVDWPSSRSNSD. Helical transmembrane passes span 159–179, 212–232, and 255–275; these read IAILIFLLQLPPMVLTLVQFL, LGTMIAMDGFCLLFWGLFMWT, and SGKNGGVNALCVGIVLVLHLI. Disordered regions lie at residues 342-367, 574-599, 878-906, and 954-1013; these read SMAKNRAPAPPRTGKRIDTEASAGSQ, SDAEQVSSISAPPQPTYRPSSPTTTL, QHASSLVGATSSHPASPTQTPSYLQHFPT, and LSEA…GKGI. A coiled-coil region spans residues 597–806; that stretch reads TTLKNSIINA…QEYQLRTNQL (210 aa). Residues 993 to 1002 are compositionally biased toward gly residues; sequence SGSGGSGSGS. A compositionally biased stretch (low complexity) spans 1003 to 1013; the sequence is GSPSSAAGKGI.

Belongs to the acrB family.

The protein localises to the membrane. Component of the regulatory network controlling carbon source utilization through ubiquitination and deubiquitination involving creA, creB, creC, creD and acrB. Involved in resistance to acriflavine, and required for normal growth on a range of sole carbon sources, including fructose, cellobiose, raffinose, and starch, and reduced utilization of amino acids, including GABA and beta-alanine, as sole carbon and nitrogen sources. The sequence is that of Probable ubiquitination network signaling protein acrB (acrB) from Aspergillus terreus (strain NIH 2624 / FGSC A1156).